The sequence spans 690 residues: Glycine--tRNA ligase 1, mitochondrial (690 aa).

The N-terminal 24 residues, 1 to 24 (MSFFNISRRFYSQIVKKSVKIKRM), are a transit peptide targeting the mitochondrion. Serine 25 bears the N-acetylserine mark. Residue serine 226 is modified to Phosphoserine. A glycine-binding site is contributed by glutamate 251. ATP-binding positions include 283–285 (RNE) and 294–295 (RV). Glutamate 302 is a binding site for glycine. 410 to 411 (EC) serves as a coordination point for ATP. Serine 476 and serine 528 each carry phosphoserine. 531–533 (EPS) provides a ligand contact to glycine. Arginine 538 contacts ATP. Threonine 689 carries the phosphothreonine modification.

The protein belongs to the class-II aminoacyl-tRNA synthetase family. As to quaternary structure, homodimer.

The protein resides in the cytoplasm. It localises to the mitochondrion matrix. The enzyme catalyses tRNA(Gly) + glycine + ATP = glycyl-tRNA(Gly) + AMP + diphosphate. It carries out the reaction 2 ATP + H(+) = P(1),P(4)-bis(5'-adenosyl) tetraphosphate + diphosphate. Functionally, catalyzes the ATP-dependent ligation of glycine to the 3'-end of its cognate tRNA, via the formation of an aminoacyl-adenylate intermediate (Gly-AMP). Also produces diadenosine tetraphosphate (Ap4A), a universal pleiotropic signaling molecule needed for cell regulation pathways, by direct condensation of 2 ATPs. Thereby, may play a special role in Ap4A homeostasis. The chain is Glycine--tRNA ligase 1, mitochondrial (GRS1) from Saccharomyces cerevisiae (strain ATCC 204508 / S288c) (Baker's yeast).